The chain runs to 1333 residues: NPC1-like intracellular cholesterol transporter 1 (1333 aa).

The signal sequence occupies residues 1–20 (MAAAWQGWLLWALLLNSAQG). Over 21 to 284 (ELYTPTHKAG…SFYMGRMPGW (264 aa)) the chain is Extracellular. Intrachain disulfides connect C32–C90, C38–C56, C77–C125, C91–C129, C113–C254, C116–C172, C189–C197, C243–C259, and C256–C263. Residues 285-305 (LALIIIFTAVFVLLSVVLVYL) traverse the membrane as a helical segment. Over 306–352 (RVASNRNKNKTAGSQEAPNLPRKRRFSPHTVLGRFFESWGTRVASWP) the chain is Cytoplasmic. The helical transmembrane segment at 353–373 (LTVLALSFIVVIALSVGLTFI) threads the bilayer. The Extracellular segment spans residues 374-632 (ELTTDPVELW…DEINRTTIQD (259 aa)). 2 disulfides stabilise this stretch: C471-C485 and C525-C542. The SSD domain maps to 632 to 797 (DLPVFAISYL…MTAFVALLSL (166 aa)). The chain crosses the membrane as a helical span at residues 633-653 (LPVFAISYLIVFLYISLALGS). Residues 654-665 (YSRWSRVAVDSK) are Cytoplasmic-facing. A helical membrane pass occupies residues 666–686 (ATLGLGGVAVVLGAVVAAMGF). The Extracellular portion of the chain corresponds to 687 to 696 (YSYLGVPSSL). The helical transmembrane segment at 697 to 717 (VIIQVVPFLVLAVGADNIFIF) threads the bilayer. The Cytoplasmic segment spans residues 718–742 (VLEYQRLPRMPGEQREAHIGRTLGS). Residues 743–763 (VAPSMLLCSLSEAICFFLGAL) form a helical membrane-spanning segment. At 764-776 (TSMPAVRTFALTS) the chain is on the extracellular side. The helical transmembrane segment at 777–797 (GLAIIFDFLLQMTAFVALLSL) threads the bilayer. Residues 798–846 (DSKRQEASRPDVVCCFSSRNLPPPKQKEGLLLCFFRKIYTPFLLHRFIR) lie on the Cytoplasmic side of the membrane. The helical transmembrane segment at 847 to 867 (PVVLLLFLVLFGANLYLMCNI) threads the bilayer. Residues 868–1113 (SVGLDQDLAL…QQYLTVLPEG (246 aa)) are Extracellular-facing. Cystine bridges form between C920-C925, C967-C1025, and C981-C990. The helical transmembrane segment at 1114–1134 (IFTLALCFVPTFVVCYLLLGL) threads the bilayer. At 1135–1142 (DIRSGILN) the chain is on the cytoplasmic side. The chain crosses the membrane as a helical span at residues 1143-1163 (LLSIIMILVDTIGLMAVWGIS). Topologically, residues 1164 to 1165 (YN) are extracellular. A helical membrane pass occupies residues 1166-1186 (AVSLINLVTAVGMSVEFVSHI). Over 1187-1206 (TRSFAVSTKPTRLERAKDAT) the chain is Cytoplasmic. Residues 1207–1227 (IFMGSAVFAGVAMTNFPGILI) traverse the membrane as a helical segment. Topologically, residues 1228–1242 (LGFAQAQLIQIFFFR) are extracellular. The helical transmembrane segment at 1243–1263 (LNLLITLLGLLHGLVFLPVVL) threads the bilayer. Over 1264–1333 (SYLGPDVNQA…SSLPKSDQKF (70 aa)) the chain is Cytoplasmic.

This sequence belongs to the patched family. In terms of assembly, interacts with RAB11A, MYO5B and RAB11FIP2. Interaction with RAB11A, MYO5B and RAB11FIP2 is required for proper transport to the plasma membrane upon cholesterol depletion. Interacts with NPC2. Interacts with LIMA1. In terms of processing, highly glycosylated. In terms of tissue distribution, expressed in small intestine, stomach and muscle, along with detectable expression in lung, heart, gall bladder, brain, testis, skin and liver. Expression in liver is extremely low.

It is found in the apical cell membrane. It localises to the cell membrane. The catalysed reaction is cholesterol(in) = cholesterol(out). The enzyme catalyses sitosterol(out) = sitosterol(in). Its function is as follows. Plays a major role in cholesterol homeostasis. Critical for the uptake of cholesterol across the plasma membrane of the intestinal enterocyte. Involved in plant sterol absorption, it transports sitosterol, although at lower rates than cholesterol. May have a function in the transport of multiple lipids and their homeostasis, thereby influencing lipid metabolism regulation. May be involved in caveolin trafficking from the plasma membrane. Acts as a negative regulator of NPC2 and down-regulates its expression and secretion by inhibiting its maturation and accelerating its degradation. In Mus musculus (Mouse), this protein is NPC1-like intracellular cholesterol transporter 1.